Reading from the N-terminus, the 253-residue chain is Imidazole glycerol phosphate synthase subunit HisF (253 aa).

Catalysis depends on residues Asp-11 and Asp-130.

This sequence belongs to the HisA/HisF family. As to quaternary structure, heterodimer of HisH and HisF.

It is found in the cytoplasm. The catalysed reaction is 5-[(5-phospho-1-deoxy-D-ribulos-1-ylimino)methylamino]-1-(5-phospho-beta-D-ribosyl)imidazole-4-carboxamide + L-glutamine = D-erythro-1-(imidazol-4-yl)glycerol 3-phosphate + 5-amino-1-(5-phospho-beta-D-ribosyl)imidazole-4-carboxamide + L-glutamate + H(+). Its pathway is amino-acid biosynthesis; L-histidine biosynthesis; L-histidine from 5-phospho-alpha-D-ribose 1-diphosphate: step 5/9. Functionally, IGPS catalyzes the conversion of PRFAR and glutamine to IGP, AICAR and glutamate. The HisF subunit catalyzes the cyclization activity that produces IGP and AICAR from PRFAR using the ammonia provided by the HisH subunit. This is Imidazole glycerol phosphate synthase subunit HisF from Geotalea uraniireducens (strain Rf4) (Geobacter uraniireducens).